The sequence spans 217 residues: CASP-like protein UU4 (217 aa).

Over residues 1–11 (MYTGQSDHRPE) the composition is skewed to basic and acidic residues. The segment at 1-21 (MYTGQSDHRPEGVGVNPGSPN) is disordered. At 1–61 (MYTGQSDHRP…VKKNINHMSG (61 aa)) the chain is on the cytoplasmic side. Residues 62–82 (LSLGLRVSEFVLSVIAFSLMA) traverse the membrane as a helical segment. Residues 83 to 98 (SAEQNGAVYSTFTSYS) are Extracellular-facing. The chain crosses the membrane as a helical span at residues 99–119 (FVLAINVLVALYAIGQIILSV). Residues 120 to 141 (MPLVSGSAPKKLYLFITFGCDQ) are Cytoplasmic-facing. The helical transmembrane segment at 142–162 (LSAFLLMAAGAAGASVAMLIN) threads the bilayer. The Extracellular portion of the chain corresponds to 163 to 187 (RKGVIDDYGSGCIDGKITVFCAHAE). Residues 188-208 (ASIAFTFLSFFCVMISSYLGV) traverse the membrane as a helical segment. The Cytoplasmic segment spans residues 209-217 (YNLAPYLIL).

Belongs to the Casparian strip membrane proteins (CASP) family. As to quaternary structure, homodimer and heterodimers.

Its subcellular location is the cell membrane. The polypeptide is CASP-like protein UU4 (Physcomitrium patens (Spreading-leaved earth moss)).